The sequence spans 623 residues: tRNA uridine 5-carboxymethylaminomethyl modification enzyme MnmG (623 aa).

Position 12-17 (12-17) interacts with FAD; that stretch reads GAGHAG. Residue 272–286 coordinates NAD(+); the sequence is GPRYCPSIEDKINRF.

The protein belongs to the MnmG family. In terms of assembly, homodimer. Heterotetramer of two MnmE and two MnmG subunits. Requires FAD as cofactor.

Its subcellular location is the cytoplasm. Functionally, NAD-binding protein involved in the addition of a carboxymethylaminomethyl (cmnm) group at the wobble position (U34) of certain tRNAs, forming tRNA-cmnm(5)s(2)U34. The sequence is that of tRNA uridine 5-carboxymethylaminomethyl modification enzyme MnmG from Christiangramia forsetii (strain DSM 17595 / CGMCC 1.15422 / KT0803) (Gramella forsetii).